The primary structure comprises 247 residues: Pulmonary surfactant-associated protein A (247 aa).

Positions 1–15 (MLLLSLALTLISAPA) are cleaved as a signal peptide. In terms of domain architecture, Collagen-like spans 27–99 (GSPGIPGTPG…PGERGPPGLP (73 aa)). A 4-hydroxyproline mark is found at Pro-29, Pro-32, Pro-35, Pro-41, Pro-53, Pro-56, Pro-62, Pro-66, and Pro-69. A disordered region spans residues 30–100 (GIPGTPGSHG…GERGPPGLPA (71 aa)). Positions 41-50 (PGRDGRDGVK) are enriched in basic and acidic residues. The span at 53–64 (PGPPGPMGPPGG) shows a compositional bias: pro residues. The segment covering 83–92 (ERGDKGEPGE) has biased composition (basic and acidic residues). Positions 132–247 (AVGEKIFSTN…LQYRLVICEF (116 aa)) constitute a C-type lectin domain. Cystine bridges form between Cys-154/Cys-245 and Cys-223/Cys-237. An N-linked (GlcNAc...) asparagine glycan is attached at Asn-206. 4 residues coordinate Ca(2+): Glu-214, Arg-216, Asn-233, and Asp-234.

It belongs to the SFTPA family. Oligomeric complex of 6 set of homotrimers.

Its subcellular location is the secreted. The protein localises to the extracellular space. The protein resides in the extracellular matrix. It localises to the surface film. Its function is as follows. In presence of calcium ions, it binds to surfactant phospholipids and contributes to lower the surface tension at the air-liquid interface in the alveoli of the mammalian lung and is essential for normal respiration. Enhances the expression of MYO18A/SP-R210 on alveolar macrophages. In Oryctolagus cuniculus (Rabbit), this protein is Pulmonary surfactant-associated protein A (SFTPA1).